Consider the following 162-residue polypeptide: UPF0114 protein PA4574 (162 aa).

The next 3 helical transmembrane spans lie at 10–32, 53–75, and 136–156; these read YASRWLLAPIYMGLSLALLALTI, LILVLLSLIDMALVGGLLVMVMI, and LMWYVIIHMTFVLSAFAMGYL.

Belongs to the UPF0114 family.

The protein localises to the cell membrane. In Pseudomonas aeruginosa (strain ATCC 15692 / DSM 22644 / CIP 104116 / JCM 14847 / LMG 12228 / 1C / PRS 101 / PAO1), this protein is UPF0114 protein PA4574.